The following is a 517-amino-acid chain: ATP synthase subunit alpha 2 (517 aa).

Residue 173-180 coordinates ATP; that stretch reads GDRQTGKT.

The protein belongs to the ATPase alpha/beta chains family. F-type ATPases have 2 components, CF(1) - the catalytic core - and CF(0) - the membrane proton channel. CF(1) has five subunits: alpha(3), beta(3), gamma(1), delta(1), epsilon(1). CF(0) has three main subunits: a(1), b(2) and c(9-12). The alpha and beta chains form an alternating ring which encloses part of the gamma chain. CF(1) is attached to CF(0) by a central stalk formed by the gamma and epsilon chains, while a peripheral stalk is formed by the delta and b chains.

It is found in the cell inner membrane. The enzyme catalyses ATP + H2O + 4 H(+)(in) = ADP + phosphate + 5 H(+)(out). In terms of biological role, produces ATP from ADP in the presence of a proton gradient across the membrane. The alpha chain is a regulatory subunit. The protein is ATP synthase subunit alpha 2 of Legionella pneumophila subsp. pneumophila (strain Philadelphia 1 / ATCC 33152 / DSM 7513).